A 299-amino-acid chain; its full sequence is ATP phosphoribosyltransferase (299 aa).

It belongs to the ATP phosphoribosyltransferase family. Long subfamily. Mg(2+) is required as a cofactor.

The protein resides in the cytoplasm. It catalyses the reaction 1-(5-phospho-beta-D-ribosyl)-ATP + diphosphate = 5-phospho-alpha-D-ribose 1-diphosphate + ATP. The protein operates within amino-acid biosynthesis; L-histidine biosynthesis; L-histidine from 5-phospho-alpha-D-ribose 1-diphosphate: step 1/9. Its activity is regulated as follows. Feedback inhibited by histidine. Its function is as follows. Catalyzes the condensation of ATP and 5-phosphoribose 1-diphosphate to form N'-(5'-phosphoribosyl)-ATP (PR-ATP). Has a crucial role in the pathway because the rate of histidine biosynthesis seems to be controlled primarily by regulation of HisG enzymatic activity. This Campylobacter jejuni subsp. doylei (strain ATCC BAA-1458 / RM4099 / 269.97) protein is ATP phosphoribosyltransferase.